Reading from the N-terminus, the 98-residue chain is Cystatin-B (98 aa).

N-acetylmethionine is present on M1. Residues 46 to 50 carry the Secondary area of contact motif; it reads QLVAG.

It belongs to the cystatin family. Able to form dimers stabilized by noncovalent forces.

Its subcellular location is the cytoplasm. This is an intracellular thiol proteinase inhibitor. This is Cystatin-B (CSTB) from Bos taurus (Bovine).